A 291-amino-acid polypeptide reads, in one-letter code: Phytanoyl-CoA dioxygenase domain-containing protein 1 (291 aa).

The residue at position 55 (Thr55) is a Phosphothreonine. Residues Lys102, Met141, 156–158 (HQD), and Trp174 each bind 2-oxoglutarate. Residues His156 and Asp158 each contribute to the Fe cation site. His246 serves as a coordination point for Fe cation. 2-oxoglutarate contacts are provided by Ser248 and Arg257.

Belongs to the PhyH family. PHYHD1 subfamily. The cofactor is Fe cation.

2-oxoglutarate(2OG)-dependent dioxygenase that catalyzes the conversion of 2-oxoglutarate to succinate and CO(2) in an iron-dependent manner. However, does not couple 2OG turnover to the hydroxylation of acyl-coenzyme A derivatives, implying that it is not directly involved in phytanoyl coenzyme-A metabolism. Does not show detectable activity towards fatty acid CoA thioesters. This is Phytanoyl-CoA dioxygenase domain-containing protein 1 (Phyhd1) from Rattus norvegicus (Rat).